Reading from the N-terminus, the 292-residue chain is Porphobilinogen deaminase (292 aa).

An S-(dipyrrolylmethanemethyl)cysteine modification is found at Cys-236.

It belongs to the HMBS family. Monomer. The cofactor is dipyrromethane.

The catalysed reaction is 4 porphobilinogen + H2O = hydroxymethylbilane + 4 NH4(+). The protein operates within porphyrin-containing compound metabolism; protoporphyrin-IX biosynthesis; coproporphyrinogen-III from 5-aminolevulinate: step 2/4. Functionally, tetrapolymerization of the monopyrrole PBG into the hydroxymethylbilane pre-uroporphyrinogen in several discrete steps. The chain is Porphobilinogen deaminase from Wolbachia sp. subsp. Drosophila simulans (strain wRi).